The chain runs to 389 residues: Alanine racemase 1 (389 aa).

The active-site Proton acceptor; specific for D-alanine is Lys-41. An N6-(pyridoxal phosphate)lysine modification is found at Lys-41. Arg-137 is a substrate binding site. Residue Tyr-266 is the Proton acceptor; specific for L-alanine of the active site. Met-313 provides a ligand contact to substrate.

This sequence belongs to the alanine racemase family. It depends on pyridoxal 5'-phosphate as a cofactor.

The enzyme catalyses L-alanine = D-alanine. It functions in the pathway amino-acid biosynthesis; D-alanine biosynthesis; D-alanine from L-alanine: step 1/1. Its function is as follows. Catalyzes the interconversion of L-alanine and D-alanine. May also act on other amino acids. The polypeptide is Alanine racemase 1 (alr1) (Bacillus subtilis (strain 168)).